A 667-amino-acid polypeptide reads, in one-letter code: Bicarbonate transport ATP-binding protein CmpC (667 aa).

The 235-residue stretch at Val5–Glu239 folds into the ABC transporter domain. Gly42–Ser49 is a binding site for ATP. Positions Leu281–Ala667 are cmpA-like.

Belongs to the ABC transporter superfamily. Nitrate/nitrite/cyanate uptake transporter (NitT) (TC 3.A.1.16) family. In terms of assembly, the complex is composed of two ATP-binding proteins (CmpC and CmpD), a transmembrane protein (CmpB) and a solute-binding protein (CmpA).

The protein resides in the cell inner membrane. Functionally, part of the ABC transporter complex CmpABCD involved in bicarbonate transport. Responsible for energy coupling to the transport system. This Synechocystis sp. (strain ATCC 27184 / PCC 6803 / Kazusa) protein is Bicarbonate transport ATP-binding protein CmpC (cmpC).